We begin with the raw amino-acid sequence, 240 residues long: Thiopurine S-methyltransferase (240 aa).

S-adenosyl-L-methionine is bound at residue 24–35 (WKDKWVTRHISF). F35 contacts substrate. K53 carries the post-translational modification N6-acetyllysine. S-adenosyl-L-methionine contacts are provided by residues L64, E85, 129–130 (SI), and R147.

The protein belongs to the class I-like SAM-binding methyltransferase superfamily. TPMT family. As to quaternary structure, monomer.

It is found in the cytoplasm. It carries out the reaction S-adenosyl-L-methionine + a thiopurine = S-adenosyl-L-homocysteine + a thiopurine S-methylether.. The enzyme catalyses mercaptopurine + S-adenosyl-L-methionine = 6-methylthiopurine + S-adenosyl-L-homocysteine + H(+). In terms of biological role, catalyzes the S-methylation of thiopurine drugs such as 6-mercaptopurine (also called mercaptopurine, 6-MP or its brand name Purinethol) using S-adenosyl-L-methionine as the methyl donor. TPMT activity modulates the cytotoxic effects of thiopurine prodrugs. A natural substrate for this enzyme has yet to be identified. This chain is Thiopurine S-methyltransferase (Tpmt), found in Mus spretus (Western Mediterranean mouse).